We begin with the raw amino-acid sequence, 266 residues long: MLKDITLGQYVPLDSPVHRLDPRTKVIATLLFSIALFLLPTLRSVTLAGLPIIIAIVATRLPIHYILRGIKPLWIFIVFTLLVHLLSTPGETAVRLGPFAITWEGLRQGAMVSQRLIWLYAATSLLTLTTSPIALTDGLELLLSPGKRIGLPVHEFAMMTSIALRFIPTLIEETEKIMKAQSSRGADFDSGSLVARVKSLVPLMVPLLLSAFRRADELAMAMEARCYRGGEGRTRMRPLVMSGKDYAVTVAVSGVFILICLWKKAL.

The next 7 helical transmembrane spans lie at 26-46 (VIAT…RSVT), 47-67 (LAGL…HYIL), 69-89 (GIKP…LSTP), 116-136 (LIWL…IALT), 151-171 (LPVH…PTLI), 192-212 (SLVA…LSAF), and 246-266 (YAVT…KKAL).

It belongs to the energy-coupling factor EcfT family. Forms a stable energy-coupling factor (ECF) transporter complex composed of 2 membrane-embedded substrate-binding proteins (S component), 2 ATP-binding proteins (A component) and 2 transmembrane proteins (T component). May be able to interact with more than 1 S component at a time.

Its subcellular location is the cell membrane. Its function is as follows. Transmembrane (T) component of an energy-coupling factor (ECF) ABC-transporter complex. Unlike classic ABC transporters this ECF transporter provides the energy necessary to transport a number of different substrates. In Heliobacterium modesticaldum (strain ATCC 51547 / Ice1), this protein is Energy-coupling factor transporter transmembrane protein EcfT.